Consider the following 840-residue polypeptide: Heat shock 70 kDa protein 4 (840 aa).

N6-acetyllysine is present on lysine 53. A Phosphoserine modification is found at serine 76. Tyrosine 89 and tyrosine 336 each carry phosphotyrosine. Phosphoserine is present on residues serine 393 and serine 415. Residue lysine 430 is modified to N6-acetyllysine. The disordered stretch occupies residues 506–575; it reads NEEPMETDQN…QAKKAKVKTS (70 aa). The segment covering 514–533 has biased composition (basic and acidic residues); that stretch reads QNAKEEEKMQVDQEEPHAEE. At threonine 538 the chain carries Phosphothreonine. Serine 546 and serine 647 each carry phosphoserine. Tyrosine 660 carries the phosphotyrosine modification. Position 679 is an N6-acetyllysine (lysine 679). Phosphoserine is present on serine 756. Residue lysine 773 is modified to N6-methyllysine. The disordered stretch occupies residues 782 to 840; sequence IISKPKPKVEPPKEEQKNAEQNGPVDGQGDSPGPQAAEQGTDTAVPSDSDKKLPEMDID. 2 stretches are compositionally biased toward basic and acidic residues: residues 788–799 and 829–840; these read PKVEPPKEEQKN and DSDKKLPEMDID.

This sequence belongs to the heat shock protein 70 family. Interacts with TJP1/ZO-1.

It is found in the cytoplasm. In Canis lupus familiaris (Dog), this protein is Heat shock 70 kDa protein 4 (HSPA4).